We begin with the raw amino-acid sequence, 302 residues long: UDP-N-acetylenolpyruvoylglucosamine reductase (302 aa).

The 166-residue stretch at 27-192 folds into the FAD-binding PCMH-type domain; sequence KTGGPADYVA…VSVTFGLKPG (166 aa). R171 is a catalytic residue. S221 acts as the Proton donor in catalysis. The active site involves E291.

It belongs to the MurB family. FAD serves as cofactor.

It localises to the cytoplasm. It carries out the reaction UDP-N-acetyl-alpha-D-muramate + NADP(+) = UDP-N-acetyl-3-O-(1-carboxyvinyl)-alpha-D-glucosamine + NADPH + H(+). It functions in the pathway cell wall biogenesis; peptidoglycan biosynthesis. Functionally, cell wall formation. This Lactiplantibacillus plantarum (strain ATCC BAA-793 / NCIMB 8826 / WCFS1) (Lactobacillus plantarum) protein is UDP-N-acetylenolpyruvoylglucosamine reductase.